Reading from the N-terminus, the 223-residue chain is Mitochondrial cardiolipin hydrolase (223 aa).

The Mitochondrial intermembrane portion of the chain corresponds to Met1 to Ser6. A helical membrane pass occupies residues Lys7 to Val24. Topologically, residues Ala25–Lys223 are cytoplasmic. A PLD phosphodiesterase domain is found at Thr164–Ala191. Residues His169, Lys171, and Asp176 contribute to the active site.

The protein belongs to the phospholipase D family. MitoPLD/Zucchini subfamily. Homodimer.

It localises to the mitochondrion outer membrane. Functionally, plays a critical role in PIWI-interacting RNA (piRNA) biogenesis. piRNAs provide essential protection against the activity of mobile genetic elements. piRNA-mediated transposon silencing is thus critical for maintaining genome stability. Backbone-non-specific, single strand-specific nuclease, cleaving either RNA or DNA substrates with similar affinity. Produces 5' phosphate and 3' hydroxyl termini, suggesting it could directly participate in the processing of primary piRNA transcripts. Has been proposed to act as a cardiolipin hydrolase to generate phosphatidic acid at mitochondrial surface. Although it cannot be excluded that it can act as a phospholipase in some circumstances, this activity could not be confirmed. The polypeptide is Mitochondrial cardiolipin hydrolase (Chlamydomonas reinhardtii (Chlamydomonas smithii)).